A 267-amino-acid polypeptide reads, in one-letter code: Dihydropteroate synthase (267 aa).

The region spanning 1–251 (MTKTKIMGIL…NVELNAKLAK (251 aa)) is the Pterin-binding domain. Asn-11 serves as a coordination point for Mg(2+). (7,8-dihydropterin-6-yl)methyl diphosphate is bound by residues Thr-51, Asp-84, Asn-103, Asp-167, Lys-203, and 239–241 (RVH).

The protein belongs to the DHPS family. In terms of assembly, homodimer. Requires Mg(2+) as cofactor.

It carries out the reaction (7,8-dihydropterin-6-yl)methyl diphosphate + 4-aminobenzoate = 7,8-dihydropteroate + diphosphate. The protein operates within cofactor biosynthesis; tetrahydrofolate biosynthesis; 7,8-dihydrofolate from 2-amino-4-hydroxy-6-hydroxymethyl-7,8-dihydropteridine diphosphate and 4-aminobenzoate: step 1/2. Catalyzes the condensation of para-aminobenzoate (pABA) with 6-hydroxymethyl-7,8-dihydropterin diphosphate (DHPt-PP) to form 7,8-dihydropteroate (H2Pte), the immediate precursor of folate derivatives. This is Dihydropteroate synthase (folP) from Staphylococcus aureus (strain Mu50 / ATCC 700699).